A 177-amino-acid chain; its full sequence is Acireductone dioxygenase (177 aa).

4 residues coordinate Fe(2+): histidine 99, histidine 101, glutamate 105, and histidine 143. Ni(2+) is bound by residues histidine 99, histidine 101, glutamate 105, and histidine 143.

The protein belongs to the acireductone dioxygenase (ARD) family. As to quaternary structure, monomer. It depends on Fe(2+) as a cofactor. Ni(2+) is required as a cofactor.

It catalyses the reaction 1,2-dihydroxy-5-(methylsulfanyl)pent-1-en-3-one + O2 = 3-(methylsulfanyl)propanoate + CO + formate + 2 H(+). It carries out the reaction 1,2-dihydroxy-5-(methylsulfanyl)pent-1-en-3-one + O2 = 4-methylsulfanyl-2-oxobutanoate + formate + 2 H(+). It functions in the pathway amino-acid biosynthesis; L-methionine biosynthesis via salvage pathway; L-methionine from S-methyl-5-thio-alpha-D-ribose 1-phosphate: step 5/6. In terms of biological role, catalyzes 2 different reactions between oxygen and the acireductone 1,2-dihydroxy-3-keto-5-methylthiopentene (DHK-MTPene) depending upon the metal bound in the active site. Fe-containing acireductone dioxygenase (Fe-ARD) produces formate and 2-keto-4-methylthiobutyrate (KMTB), the alpha-ketoacid precursor of methionine in the methionine recycle pathway. Ni-containing acireductone dioxygenase (Ni-ARD) produces methylthiopropionate, carbon monoxide and formate, and does not lie on the methionine recycle pathway. The sequence is that of Acireductone dioxygenase from Leptospira interrogans serogroup Icterohaemorrhagiae serovar copenhageni (strain Fiocruz L1-130).